The following is a 496-amino-acid chain: Membrane-bound lytic murein transglycosylase F (496 aa).

The first 31 residues, 1–31 (MPIFSTRVLTYLRCIFRLFIGLMLLLTLVGC), serve as a signal peptide directing secretion. Residues 32–271 (DFYTPSSQLE…KLDEKYFGHV (240 aa)) are non-LT domain. An LT domain region spans residues 273-496 (NFDFVDTRTF…AEVVKQITLR (224 aa)). Glu-316 is a catalytic residue. Positions 464-485 (HRREELDEDDSSEPQSTERPTV) are disordered.

This sequence in the N-terminal section; belongs to the bacterial solute-binding protein 3 family. It in the C-terminal section; belongs to the transglycosylase Slt family.

Its subcellular location is the cell outer membrane. It carries out the reaction Exolytic cleavage of the (1-&gt;4)-beta-glycosidic linkage between N-acetylmuramic acid (MurNAc) and N-acetylglucosamine (GlcNAc) residues in peptidoglycan, from either the reducing or the non-reducing ends of the peptidoglycan chains, with concomitant formation of a 1,6-anhydrobond in the MurNAc residue.. Its function is as follows. Murein-degrading enzyme that degrades murein glycan strands and insoluble, high-molecular weight murein sacculi, with the concomitant formation of a 1,6-anhydromuramoyl product. Lytic transglycosylases (LTs) play an integral role in the metabolism of the peptidoglycan (PG) sacculus. Their lytic action creates space within the PG sacculus to allow for its expansion as well as for the insertion of various structures such as secretion systems and flagella. In Aeromonas salmonicida (strain A449), this protein is Membrane-bound lytic murein transglycosylase F.